The chain runs to 463 residues: Asparagine--tRNA ligase (463 aa).

It belongs to the class-II aminoacyl-tRNA synthetase family. As to quaternary structure, homodimer.

The protein localises to the cytoplasm. The catalysed reaction is tRNA(Asn) + L-asparagine + ATP = L-asparaginyl-tRNA(Asn) + AMP + diphosphate + H(+). This chain is Asparagine--tRNA ligase, found in Alkaliphilus metalliredigens (strain QYMF).